We begin with the raw amino-acid sequence, 329 residues long: MVSQLTDAFARTFYYLRLSVTDVCNFRCTYCLPGGYRPDSHGAKRFLSCDEIRRISHAFAALGTEKVRLTGGEPTLRRDFCDIVAAVRENSAIRTLAVTTNGYRMARDVGAWRDAGLTAINVSVDSLDARQFHAITGEDRFAQVMAGIDAAFDAGFGRIKVNTVLMRGVNDGSLQAFLHWIRRRPIQMRFIELMETGDGSELFRRHHVSGATIRTQLLAAGWQRRLPGRSDGPAQVFWHPDYLGEVGLIMPYEKNFCASCNRLRVSAVGNLHLCLFGEQGIALRDLLQEDAQQAALQVRIAAALRHKREGHFLHQGDSGHTQNLSFIGG.

Residues 8–229 (AFARTFYYLR…AGWQRRLPGR (222 aa)) enclose the Radical SAM core domain. Arginine 17 is a GTP binding site. [4Fe-4S] cluster contacts are provided by cysteine 24 and cysteine 28. An S-adenosyl-L-methionine-binding site is contributed by tyrosine 30. Position 31 (cysteine 31) interacts with [4Fe-4S] cluster. Arginine 68 contributes to the GTP binding site. Residue glycine 72 participates in S-adenosyl-L-methionine binding. Threonine 99 is a GTP binding site. Residue serine 123 coordinates S-adenosyl-L-methionine. Lysine 160 contributes to the GTP binding site. An S-adenosyl-L-methionine-binding site is contributed by methionine 194. [4Fe-4S] cluster contacts are provided by cysteine 257 and cysteine 260. A GTP-binding site is contributed by 262–264 (RLR). Residue cysteine 274 participates in [4Fe-4S] cluster binding.

It belongs to the radical SAM superfamily. MoaA family. As to quaternary structure, monomer and homodimer. [4Fe-4S] cluster is required as a cofactor.

The catalysed reaction is GTP + AH2 + S-adenosyl-L-methionine = (8S)-3',8-cyclo-7,8-dihydroguanosine 5'-triphosphate + 5'-deoxyadenosine + L-methionine + A + H(+). It functions in the pathway cofactor biosynthesis; molybdopterin biosynthesis. Functionally, catalyzes the cyclization of GTP to (8S)-3',8-cyclo-7,8-dihydroguanosine 5'-triphosphate. The chain is GTP 3',8-cyclase from Edwardsiella ictaluri (strain 93-146).